The chain runs to 297 residues: Acetylglutamate kinase (297 aa).

Residues 68 to 69 (GG), Arg-90, and Asn-189 each bind substrate.

It belongs to the acetylglutamate kinase family. ArgB subfamily.

The protein resides in the cytoplasm. It catalyses the reaction N-acetyl-L-glutamate + ATP = N-acetyl-L-glutamyl 5-phosphate + ADP. Its pathway is amino-acid biosynthesis; L-arginine biosynthesis; N(2)-acetyl-L-ornithine from L-glutamate: step 2/4. Functionally, catalyzes the ATP-dependent phosphorylation of N-acetyl-L-glutamate. In Akkermansia muciniphila (strain ATCC BAA-835 / DSM 22959 / JCM 33894 / BCRC 81048 / CCUG 64013 / CIP 107961 / Muc), this protein is Acetylglutamate kinase.